The sequence spans 805 residues: Sucrose synthase 1 (805 aa).

The interval Met274–Thr751 is GT-B glycosyltransferase.

Belongs to the glycosyltransferase 1 family. Plant sucrose synthase subfamily.

It carries out the reaction an NDP-alpha-D-glucose + D-fructose = a ribonucleoside 5'-diphosphate + sucrose + H(+). Its function is as follows. Sucrose-cleaving enzyme that provides UDP-glucose and fructose for various metabolic pathways. The protein is Sucrose synthase 1 of Tulipa gesneriana (Garden tulip).